The chain runs to 1525 residues: Autophagy-related protein 2 (1525 aa).

This sequence belongs to the ATG2 family.

It is found in the preautophagosomal structure membrane. The protein resides in the endoplasmic reticulum membrane. The catalysed reaction is a 1,2-diacyl-sn-glycero-3-phosphocholine(in) = a 1,2-diacyl-sn-glycero-3-phosphocholine(out). It catalyses the reaction a 1,2-diacyl-sn-glycero-3-phospho-L-serine(in) = a 1,2-diacyl-sn-glycero-3-phospho-L-serine(out). It carries out the reaction a 1,2-diacyl-sn-glycero-3-phosphoethanolamine(in) = a 1,2-diacyl-sn-glycero-3-phosphoethanolamine(out). In terms of biological role, lipid transfer protein required for autophagosome completion and peroxisome degradation. Tethers the edge of the isolation membrane (IM) to the endoplasmic reticulum (ER) and mediates direct lipid transfer from ER to IM for IM expansion. ATG2 binds to the ER exit site (ERES), which is the membrane source for autophagosome formation, using basic residues in its N-terminal region (NR) and to the expanding edge of the IM through its C-terminal region. The latter binding is assisted by an ATG18-PtdIns3P interaction. ATG2 then extracts phospholipids from the membrane source using its NR and transfers them to ATG9 to the IM through its predicted beta-sheet-rich structure for membrane expansion. This chain is Autophagy-related protein 2 (ATG2), found in Eremothecium gossypii (strain ATCC 10895 / CBS 109.51 / FGSC 9923 / NRRL Y-1056) (Yeast).